We begin with the raw amino-acid sequence, 343 residues long: Low conductance mechanosensitive channel YnaI (343 aa).

Over 1-9 the chain is Periplasmic; that stretch reads MIAELFTNN. A helical transmembrane segment spans residues 10 to 30; that stretch reads ALNLVIIFGSCAALILMSFWF. Over 31-40 the chain is Cytoplasmic; that stretch reads RRGNRKRKGF. Residues 41–61 traverse the membrane as a helical segment; it reads LFHAVQFLIYTIIISAVGSII. Topologically, residues 62-77 are periplasmic; that stretch reads NYVIENYKLKFITPGV. A helical membrane pass occupies residues 78–98; that stretch reads IDFICTSLIAVILTIKLFLLI. At 99–125 the chain is on the cytoplasmic side; it reads NQFEKQQIKKGRDITSARIMSRIIKIT. A helical transmembrane segment spans residues 126–146; the sequence is IIVVLVLLYGEHFGMSLSGLL. A topological domain (periplasmic) is located at residue Thr147. Residues 148 to 168 form a helical membrane-spanning segment; the sequence is FGGIGGLAVGMAGKDILSNFF. Residues 169-343 lie on the Cytoplasmic side of the membrane; that stretch reads SGIMLYFDRP…DNITPPEQGR (175 aa).

It belongs to the MscS (TC 1.A.23) family. As to quaternary structure, homoheptamer.

It localises to the cell inner membrane. In terms of biological role, mechanosensitive channel that protects cells against hypoosmotic stress when highly overexpressed. In Escherichia coli (strain K12), this protein is Low conductance mechanosensitive channel YnaI (ynaI).